The sequence spans 258 residues: Serine protease sp-Eoc49 (258 aa).

Residues 1–18 (MVLIRVLANLLVLQLSYA) form the signal peptide. The Peptidase S1 domain maps to 25–249 (VVGGGECNRN…YTDWIQSIIA (225 aa)). N-linked (GlcNAc...) asparagine glycosylation is present at asparagine 44. Cysteine 50 and cysteine 66 are oxidised to a cystine. The active-site Charge relay system is histidine 65. Asparagine 79 and asparagine 103 each carry an N-linked (GlcNAc...) asparagine glycan. Aspartate 110 (charge relay system) is an active-site residue. 3 disulfide bridges follow: cysteine 142-cysteine 210, cysteine 174-cysteine 189, and cysteine 200-cysteine 225. Asparagine 154 is a glycosylation site (N-linked (GlcNAc...) asparagine). Serine 204 (charge relay system) is an active-site residue. N-linked (GlcNAc...) asparagine glycosylation occurs at asparagine 251.

This sequence belongs to the peptidase S1 family. Snake venom subfamily. As to quaternary structure, monomer. Expressed by the venom gland.

It localises to the secreted. Functionally, snake venom serine protease that may act in the hemostasis system of the prey. The sequence is that of Serine protease sp-Eoc49 from Echis ocellatus (Ocellated saw-scaled viper).